We begin with the raw amino-acid sequence, 444 residues long: Probable kynurenine--oxoglutarate transaminase BNA3 (444 aa).

The residue at position 271 (Lys-271) is an N6-(pyridoxal phosphate)lysine.

Belongs to the class-I pyridoxal-phosphate-dependent aminotransferase family. As to quaternary structure, homodimer. Requires pyridoxal 5'-phosphate as cofactor.

The protein localises to the cytoplasm. It localises to the mitochondrion. It carries out the reaction L-kynurenine + 2-oxoglutarate = kynurenate + L-glutamate + H2O. Its pathway is amino-acid degradation; L-kynurenine degradation; kynurenate from L-kynurenine: step 1/2. Functionally, catalyzes the irreversible transamination of the L-tryptophan metabolite L-kynurenine to form kynurenic acid (KA). This chain is Probable kynurenine--oxoglutarate transaminase BNA3 (BNA3), found in Saccharomyces cerevisiae (strain ATCC 204508 / S288c) (Baker's yeast).